The chain runs to 98 residues: NADH-ubiquinone oxidoreductase chain 4L (98 aa).

Helical transmembrane passes span 2–22 (PSIF…TLVF), 29–49 (SLLC…LIIL), and 61–81 (ILLL…LVMV).

The protein belongs to the complex I subunit 4L family. As to quaternary structure, core subunit of respiratory chain NADH dehydrogenase (Complex I) which is composed of 45 different subunits.

The protein localises to the mitochondrion inner membrane. It catalyses the reaction a ubiquinone + NADH + 5 H(+)(in) = a ubiquinol + NAD(+) + 4 H(+)(out). In terms of biological role, core subunit of the mitochondrial membrane respiratory chain NADH dehydrogenase (Complex I) which catalyzes electron transfer from NADH through the respiratory chain, using ubiquinone as an electron acceptor. Part of the enzyme membrane arm which is embedded in the lipid bilayer and involved in proton translocation. In Avahi laniger (Eastern woolly lemur), this protein is NADH-ubiquinone oxidoreductase chain 4L (MT-ND4L).